A 430-amino-acid polypeptide reads, in one-letter code: Histidine--tRNA ligase (430 aa).

It belongs to the class-II aminoacyl-tRNA synthetase family. Homodimer.

The protein resides in the cytoplasm. It carries out the reaction tRNA(His) + L-histidine + ATP = L-histidyl-tRNA(His) + AMP + diphosphate + H(+). The polypeptide is Histidine--tRNA ligase (Acinetobacter baumannii (strain SDF)).